The chain runs to 101 residues: Small ribosomal subunit protein uS14 (101 aa).

This sequence belongs to the universal ribosomal protein uS14 family. In terms of assembly, part of the 30S ribosomal subunit. Contacts proteins S3 and S10.

Its function is as follows. Binds 16S rRNA, required for the assembly of 30S particles and may also be responsible for determining the conformation of the 16S rRNA at the A site. In Beijerinckia indica subsp. indica (strain ATCC 9039 / DSM 1715 / NCIMB 8712), this protein is Small ribosomal subunit protein uS14.